The chain runs to 250 residues: Small ribosomal subunit protein uS3z (250 aa).

The 72-residue stretch at 21–92 folds into the KH type-2 domain; sequence LNEVLTRELA…SVELYAEKVN (72 aa).

This sequence belongs to the universal ribosomal protein uS3 family. As to quaternary structure, interacts with SNRNP35.

The sequence is that of Small ribosomal subunit protein uS3z (RPS3A) from Arabidopsis thaliana (Mouse-ear cress).